A 409-amino-acid chain; its full sequence is Aspartic protease pepA (409 aa).

Positions 1 to 19 (MPSIVSLTAALTFVGAVIA) are cleaved as a signal peptide. A propeptide spans 20–65 (SPVEKRSAFSVEQVPHTTYLKNGPAQKVKTLRKYGKPVPQSLLDAA) (activation peptide). The Peptidase A1 domain maps to 97–404 (YLSPVTVGST…PDSPPRIGLA (308 aa)). Catalysis depends on residues D113 and D293. An intrachain disulfide couples C329 to C364. A glycan (N-linked (GlcNAc...) asparagine) is linked at N335.

Belongs to the peptidase A1 family. In terms of assembly, monomer.

It localises to the secreted. In terms of biological role, secreted aspartic endopeptidase that allows assimilation of proteinaceous substrates. The scissile peptide bond is attacked by a nucleophilic water molecule activated by two aspartic residues in the active site. Shows a broad primary substrate specificity. Favors hydrophobic residues at the P1 and P1' positions. This is Aspartic protease pepA from Leptosphaeria maculans (strain JN3 / isolate v23.1.3 / race Av1-4-5-6-7-8) (Blackleg fungus).